We begin with the raw amino-acid sequence, 215 residues long: 2-dehydro-3-deoxy-phosphogluconate aldolase (215 aa).

Catalysis depends on Glu46, which acts as the Proton acceptor. Arg50, Thr74, and Lys134 together coordinate pyruvate. The Schiff-base intermediate with substrate role is filled by Lys134.

Belongs to the KHG/KDPG aldolase family. Homotrimer.

It catalyses the reaction 2-dehydro-3-deoxy-6-phospho-D-gluconate = D-glyceraldehyde 3-phosphate + pyruvate. The protein operates within carbohydrate acid metabolism; 2-dehydro-3-deoxy-D-gluconate degradation; D-glyceraldehyde 3-phosphate and pyruvate from 2-dehydro-3-deoxy-D-gluconate: step 2/2. Involved in the degradation of glucose via the Entner-Doudoroff pathway. Catalyzes the reversible, stereospecific retro-aldol cleavage of 2-keto-3-deoxy-6-phosphogluconate (KDPG) to pyruvate and D-glyceraldehyde-3-phosphate. Involved in the degradation of 3,6-anhydro-L-galactose (L-AnG), which is the major monomeric sugar of red macroalgae. The cleavage of KDPG to glyceraldehyde 3-phosphate and pyruvate is the sixth step of this pathway. The polypeptide is 2-dehydro-3-deoxy-phosphogluconate aldolase (Pseudoalteromonas atlantica (strain T6c / ATCC BAA-1087)).